The following is a 178-amino-acid chain: Large ribosomal subunit protein uL6 (178 aa).

This sequence belongs to the universal ribosomal protein uL6 family. As to quaternary structure, part of the 50S ribosomal subunit.

Its function is as follows. This protein binds to the 23S rRNA, and is important in its secondary structure. It is located near the subunit interface in the base of the L7/L12 stalk, and near the tRNA binding site of the peptidyltransferase center. The sequence is that of Large ribosomal subunit protein uL6 from Streptococcus pneumoniae (strain 70585).